We begin with the raw amino-acid sequence, 142 residues long: Hemoglobin subunit alpha-1 (142 aa).

The region spanning 2–142 (VLSAADKSNV…VSTVLTSKYR (141 aa)) is the Globin domain. O2 is bound at residue histidine 59. Histidine 88 provides a ligand contact to heme b.

This sequence belongs to the globin family. Heterotetramer of two alpha chains and two beta chains.

Involved in oxygen transport from the lung to the various peripheral tissues. Functionally, hemopressin acts as an antagonist peptide of the cannabinoid receptor CNR1. Hemopressin-binding efficiently blocks cannabinoid receptor CNR1 and subsequent signaling. This Capra hircus (Goat) protein is Hemoglobin subunit alpha-1 (HBA1).